The following is a 479-amino-acid chain: F-box/LRR-repeat protein 16 (479 aa).

Positions 1–62 (MSSPGIDGDP…PTLPPPSLAA (62 aa)) are disordered. Over residues 47 to 60 (CQPPPPPTLPPPSL) the composition is skewed to pro residues. At Arg92 the chain carries Omega-N-methylarginine. The F-box domain occupies 94 to 139 (PLATDEKILNGLFWYFSACEKCVLAQVCKAWRRVLYQPKFWAGLTP). LRR repeat units lie at residues 244-266 (ITSL…ISQL), 267-290 (LPNL…YFTA), 319-343 (LPNL…LVAE), 345-369 (LRKL…YVAC), 371-395 (LHRL…YLST), 396-420 (MSSL…HLLA), and 446-470 (LQEL…YFSQ).

In terms of assembly, interacts with SKP1 and CUL1.

Functionally, substrate-recognition component of the SCF (SKP1-CUL1-F-box protein)-type E3 ubiquitin ligase complex. The polypeptide is F-box/LRR-repeat protein 16 (FBXL16) (Homo sapiens (Human)).